The primary structure comprises 499 residues: MPVSLRFTNTLTRRTEPFQPLKDGQVSIYCCGVTVYDLCHLGHARSYINWDVLRRYLIWSGYAVTFVQNFTDIDDKILKRAAEEGSSMEAVSERNIDAFHADMDALGILRPDRMPRATRCLEGIRTLIAELEAKGAAYSADGDVYFAVMKHAGYGKLSGRDLADQQTNADGRVADAEEARKQHPFDFALWKGAKAGEPSFPSPWGNGRPGWHIECSAMVREELGDTIDIHLGGADLVFPHHENEIAQSEAATGQELARVWLHNGMVNVGGEKMSKSLGNFTTIRALLESGLSAMTLRLFVLQAHYRKPLDFTAEALEAATTGWKGLNAALSLGDLHAEALGWTPAEPMGNDAVVASESSAIDTLLSARQRFSAAMDDDLNSSGALAVLFELARPLRALANRLDRGDAPNHNDDDGQELLQRWLLLRELAAVLGLRLEHPSAPEEESDLDSQSIEAAIDARRLAKQSKDFAEADRIRAELSAQGIELIDKPGGITEWRRG.

Residue Cys31 participates in Zn(2+) binding. Positions 33 to 43 (VTVYDLCHLGH) match the 'HIGH' region motif. Residues Cys215, His240, and Glu244 each contribute to the Zn(2+) site. Positions 272 to 276 (KMSKS) match the 'KMSKS' region motif. Lys275 contacts ATP.

Belongs to the class-I aminoacyl-tRNA synthetase family. In terms of assembly, monomer. It depends on Zn(2+) as a cofactor.

The protein resides in the cytoplasm. It carries out the reaction tRNA(Cys) + L-cysteine + ATP = L-cysteinyl-tRNA(Cys) + AMP + diphosphate. The chain is Cysteine--tRNA ligase from Synechococcus sp. (strain WH7803).